We begin with the raw amino-acid sequence, 297 residues long: 33 kDa chaperonin (297 aa).

2 disulfides stabilise this stretch: cysteine 232/cysteine 234 and cysteine 266/cysteine 269.

It belongs to the HSP33 family. Under oxidizing conditions two disulfide bonds are formed involving the reactive cysteines. Under reducing conditions zinc is bound to the reactive cysteines and the protein is inactive.

The protein resides in the cytoplasm. Redox regulated molecular chaperone. Protects both thermally unfolding and oxidatively damaged proteins from irreversible aggregation. Plays an important role in the bacterial defense system toward oxidative stress. The chain is 33 kDa chaperonin from Pseudomonas paraeruginosa (strain DSM 24068 / PA7) (Pseudomonas aeruginosa (strain PA7)).